A 137-amino-acid chain; its full sequence is Interferon-induced transmembrane protein 3 (137 aa).

Residues 1–57 (MNHTSQAFVNAATGGQPPNYERIKEEYEVSELGAPHGSASVRTTVINMPREVSVPDH) lie on the Cytoplasmic side of the membrane. Tyr-20 bears the Phosphotyrosine mark. Lys-24 participates in a covalent cross-link: Glycyl lysine isopeptide (Lys-Gly) (interchain with G-Cter in ubiquitin). At Tyr-27 the chain carries Phosphotyrosine. Positions 58-78 (VVWSLFNTLFMNFCCLGFIAY) form an intramembrane region, helical. The tract at residues 60-93 (WSLFNTLFMNFCCLGFIAYAYSVKSRDRKMVGDM) is interaction with SPP1. 2 S-palmitoyl cysteine lipidation sites follow: Cys-71 and Cys-72. Residues 79–109 (AYSVKSRDRKMVGDMTGAQAYASTAKCLNIS) lie on the Cytoplasmic side of the membrane. Residues Lys-83, Lys-88, and Lys-104 each participate in a glycyl lysine isopeptide (Lys-Gly) (interchain with G-Cter in ubiquitin) cross-link. A lipid anchor (S-palmitoyl cysteine) is attached at Cys-105. The interval 108–133 (ISSLVLSILMVIITIVTVVIIALNAP) is interaction with VAPA. Residues 110–130 (SLVLSILMVIITIVTVVIIAL) form a helical membrane-spanning segment. At 131–137 (NAPRLQT) the chain is on the extracellular side.

The protein belongs to the CD225/Dispanin family. In terms of assembly, interacts with ATP6V0B. Interacts with CD81. Interacts with SPP1; the interaction reduces OPN expression. Interacts with BRI3. Polyubiquitinated with both 'Lys-48' and 'Lys-63' linkages. Ubiquitination negatively regulates antiviral activity. Lys-24 is the most prevalent ubiquitination site. Post-translationally, phosphorylation at Tyr-20 is required for endosomal and lysosomal location.

The protein localises to the cell membrane. It is found in the late endosome membrane. Its subcellular location is the early endosome membrane. The protein resides in the lysosome membrane. It localises to the cytoplasm. The protein localises to the perinuclear region. Functionally, IFN-induced antiviral protein which disrupts intracellular cholesterol homeostasis. Inhibits the entry of viruses to the host cell cytoplasm by preventing viral fusion with cholesterol depleted endosomes. May inactivate new enveloped viruses which buds out of the infected cell, by letting them go out with a cholesterol depleted membrane. Active against multiple viruses. Plays a critical role in the structural stability and function of vacuolar ATPase (v-ATPase). Establishes physical contact with the v-ATPase of endosomes which is critical for proper clathrin localization and is also required for the function of the v-ATPase to lower the pH in phagocytic endosomes thus establishing an antiviral state. The protein is Interferon-induced transmembrane protein 3 of Rattus norvegicus (Rat).